Reading from the N-terminus, the 100-residue chain is Large ribosomal subunit protein mL53 (100 aa).

Belongs to the mitochondrion-specific ribosomal protein mL53 family. In terms of assembly, component of the mitochondrial large ribosomal subunit (mt-LSU). Mature yeast 74S mitochondrial ribosomes consist of a small (37S) and a large (54S) subunit. The 37S small subunit contains a 15S ribosomal RNA (15S mt-rRNA) and at least 32 different proteins. The 54S large subunit contains a 21S rRNA (21S mt-rRNA) and at least 45 different proteins.

It is found in the mitochondrion. Functionally, component of the mitochondrial ribosome (mitoribosome), a dedicated translation machinery responsible for the synthesis of mitochondrial genome-encoded proteins, including at least some of the essential transmembrane subunits of the mitochondrial respiratory chain. The mitoribosomes are attached to the mitochondrial inner membrane and translation products are cotranslationally integrated into the membrane. The protein is Large ribosomal subunit protein mL53 (mrpl44) of Schizosaccharomyces pombe (strain 972 / ATCC 24843) (Fission yeast).